The following is an 84-amino-acid chain: Small ribosomal subunit protein bS18A (84 aa).

This sequence belongs to the bacterial ribosomal protein bS18 family. Part of the 30S ribosomal subunit. Forms a tight heterodimer with protein bS6.

In terms of biological role, binds as a heterodimer with protein bS6 to the central domain of the 16S rRNA, where it helps stabilize the platform of the 30S subunit. The chain is Small ribosomal subunit protein bS18A from Frankia alni (strain DSM 45986 / CECT 9034 / ACN14a).